The sequence spans 55 residues: Small integral membrane protein 27 (55 aa).

Residues 11 to 31 form a helical membrane-spanning segment; sequence WIYSVLLLAIVLISWGCIIYA.

The protein localises to the membrane. This chain is Small integral membrane protein 27, found in Homo sapiens (Human).